Consider the following 278-residue polypeptide: Probable CCR4-associated factor 1 homolog 5 (278 aa).

Residues aspartate 30, glutamate 32, aspartate 145, and aspartate 217 each contribute to the a divalent metal cation site.

Belongs to the CAF1 family. Component of the CCR4-NOT complex, at least composed of CRR4 and CAF1 proteins. It depends on a divalent metal cation as a cofactor.

It localises to the nucleus. The protein resides in the cytoplasm. The catalysed reaction is Exonucleolytic cleavage of poly(A) to 5'-AMP.. In terms of biological role, ubiquitous transcription factor required for a diverse set of processes. It is a component of the CCR4 complex involved in the control of gene expression. This chain is Probable CCR4-associated factor 1 homolog 5 (CAF1-5), found in Arabidopsis thaliana (Mouse-ear cress).